The primary structure comprises 889 residues: MEGGLADGEPDRTSLLGDSKDVLGPSTVVANSDESQLLTPGKMSQRQGKEAYPTPTKDLHQPSLSPASPHSQGFERGKEDISQNKDESSLSMSKSKSESKLYNGSEKDSSTSSKLTKKESLKVQKKNYREEKKRATKELLSTITDPSVIVMADWLKIRGTLKSWTKLWCVLKPGVLLIYKTQKNGQWVGTVLLNACEIIERPSKKDGFCFKLFHPLEQSIWAVKGPKGEAVGSITQPLPSSYLIIRATSESDGRCWMDALELALKCSSLLKRTMIREGKEHDLSVSSDSTHVTFYGLLRANNLHSGDNFQLNDSEIERQHFKDQDMYSDKSDKENDQEHDESDNEVMGKSEESDTDTSERQDDSYIEPEPVEPLKETTYTEQSHEELGEAGEASQTETVSEENKSLIWTLLKQVRPGMDLSKVVLPTFILEPRSFLDKLSDYYYHADFLSEAALEENPYFRLKKVVKWYLSGFYKKPKGLKKPYNPILGETFRCLWIHPRTNSKTFYIAEQVSHHPPISAFYVSNRKDGFCLSGSILAKSKFYGNSLSAILEGEARLTFLNRGEDYVMTMPYAHCKGILYGTMTLELGGTVNITCQKTGYSAILEFKLKPFLGSSDCVNQISGKLKLGKEVLATLEGHWDSEVFITDKKTDNSEVFWNPTPDIKQWRLIRHTVKFEEQGDFESEKLWQRVTRAINAKDQTEATQEKYVLEEAQRQAARDRKTKNEEWSCKLFELDPLTGEWHYKFADTRPWDPLNDMIQFEKDGVIQTKVKHRTPMVSVPKMKHKPTRQQKKVAKGYSSPEPDIQDSSGSEAQSVKPSTRRKKGIELGDIQSSIESIKQTQEEIKRNIMALRNHLVSSTPATDYFLQQKDYFIIFLLILLQVIINFMFK.

Met1 carries the N-acetylmethionine modification. The disordered stretch occupies residues 1-129 (MEGGLADGEP…SLKVQKKNYR (129 aa)). Ser14 carries the phosphoserine modification. Polar residues-rich tracts occupy residues 28–46 (VVANSDESQLLTPGKMSQR) and 62–71 (PSLSPASPHS). A phosphoserine mark is found at Ser65 and Ser68. Composition is skewed to basic and acidic residues over residues 73–88 (GFERGKEDISQNKDES), 95–109 (SKSESKLYNGSEKDS), and 116–129 (TKKESLKVQKKNYR). The PH domain maps to 148–265 (VIVMADWLKI…WMDALELALK (118 aa)). Ser314, Ser328, and Ser342 each carry phosphoserine. Over residues 322 to 336 (KDQDMYSDKSDKEND) the composition is skewed to basic and acidic residues. The tract at residues 322 to 399 (KDQDMYSDKS…AGEASQTETV (78 aa)) is disordered. Residues 346 to 363 (VMGKSEESDTDTSERQDD) show a composition bias toward basic and acidic residues. A 1,2-diacyl-sn-glycero-3-phospho-(1D-myo-inositol 4-phosphate) is bound by residues 420 to 425 (LSKVVL), 482 to 485 (KPYN), and 514 to 515 (HH). A 1,2-diacyl-sn-glycero-3-phospho-L-serine is bound by residues 420–425 (LSKVVL) and Asn485. Ser540 contributes to the a 1,2-diacyl-sn-glycero-3-phospho-L-serine binding site. 3 residues coordinate a 1,2-diacyl-sn-glycero-3-phospho-(1D-myo-inositol 4-phosphate): Lys706, Glu710, and Arg714. The disordered stretch occupies residues 771-823 (KHRTPMVSVPKMKHKPTRQQKKVAKGYSSPEPDIQDSSGSEAQSVKPSTRRKK). Residues 781–794 (KMKHKPTRQQKKVA) are compositionally biased toward basic residues. Residues 805-817 (QDSSGSEAQSVKP) show a composition bias toward polar residues. Phosphoserine occurs at positions 807, 808, 810, and 814. The chain crosses the membrane as a helical span at residues 871–888 (YFIIFLLILLQVIINFMF).

Belongs to the OSBP family. As to quaternary structure, interacts with SPAG5. Interacts with NUP62. Widely expressed. Expressed at higher level in macrophages.

Its subcellular location is the endoplasmic reticulum membrane. The protein resides in the nucleus membrane. Functionally, lipid transporter involved in lipid countertransport between the endoplasmic reticulum and the plasma membrane: specifically exchanges phosphatidylserine with phosphatidylinositol 4-phosphate (PI4P), delivering phosphatidylserine to the plasma membrane in exchange for PI4P, which is degraded by the SAC1/SACM1L phosphatase in the endoplasmic reticulum. Binds phosphatidylserine and PI4P in a mutually exclusive manner. Binds oxysterol, 25-hydroxycholesterol and cholesterol. The protein is Oxysterol-binding protein-related protein 8 (OSBPL8) of Homo sapiens (Human).